We begin with the raw amino-acid sequence, 532 residues long: MTKFIFVTGGVVSSLGKGITASALGCLLKNRGLSVAIQKFDPYINIDPGTMSPYQHGEVFVTDDGAETDLDLGHYERFIDVPVSKNSNVTTGKIYWSVLNKERRGDYLGGTVQVIPHITNEIKERIYRVARENHPDIVITEIGGTVGDIESLPYLEAIRQMRSDIGRENVLYLHVTLIPYLNASGELKTKPTQHSVKELRGIGIQPNILVCRTEHAISEDMKEKLALFCDIDREAIIQMVDAKSIYEVPLNILEEGMDDIVLKILGLEAPPADMTDWRAMVDRINNPQSETEIAIVGKYVELPDAYLSVAEALRHAGIEHLAKVKIRWVNSEEIEGSSAAELLKGVSGILVPGGFGNRGIEGKIEAIRYARENKIPFLGICLGMQTAVIEFARNVCGMTNANSSEFDVDAPYPVIDLLPEQKEIEDKGGTMRLGISPVKLIESTLVSSIYQDEVIYERHRHRYEVNNQFRAELEKGGLKFSGTSPDGRLVEITEYPDHPWFVASQFHPEFKSRPYRSHPLFREFVKATLANR.

The amidoligase domain stretch occupies residues 1–267 (MTKFIFVTGG…DDIVLKILGL (267 aa)). Serine 13 is a CTP binding site. Serine 13 is a UTP binding site. 14-19 (SLGKGI) serves as a coordination point for ATP. Position 54 (tyrosine 54) interacts with L-glutamine. Aspartate 71 provides a ligand contact to ATP. Residues aspartate 71 and glutamate 141 each contribute to the Mg(2+) site. CTP contacts are provided by residues 148 to 150 (DIE), 188 to 193 (KTKPTQ), and lysine 224. Residues 188 to 193 (KTKPTQ) and lysine 224 each bind UTP. The Glutamine amidotransferase type-1 domain maps to 292–532 (EIAIVGKYVE…EFVKATLANR (241 aa)). An L-glutamine-binding site is contributed by glycine 354. Cysteine 381 functions as the Nucleophile; for glutamine hydrolysis in the catalytic mechanism. L-glutamine contacts are provided by residues 382–385 (LGMQ), glutamate 405, and arginine 462. Active-site residues include histidine 507 and glutamate 509.

It belongs to the CTP synthase family. In terms of assembly, homotetramer.

It catalyses the reaction UTP + L-glutamine + ATP + H2O = CTP + L-glutamate + ADP + phosphate + 2 H(+). The catalysed reaction is L-glutamine + H2O = L-glutamate + NH4(+). The enzyme catalyses UTP + NH4(+) + ATP = CTP + ADP + phosphate + 2 H(+). It functions in the pathway pyrimidine metabolism; CTP biosynthesis via de novo pathway; CTP from UDP: step 2/2. With respect to regulation, allosterically activated by GTP, when glutamine is the substrate; GTP has no effect on the reaction when ammonia is the substrate. The allosteric effector GTP functions by stabilizing the protein conformation that binds the tetrahedral intermediate(s) formed during glutamine hydrolysis. Inhibited by the product CTP, via allosteric rather than competitive inhibition. Functionally, catalyzes the ATP-dependent amination of UTP to CTP with either L-glutamine or ammonia as the source of nitrogen. Regulates intracellular CTP levels through interactions with the four ribonucleotide triphosphates. In Desulfitobacterium hafniense (strain Y51), this protein is CTP synthase.